The chain runs to 176 residues: Large ribosomal subunit protein uL10 (176 aa).

Belongs to the universal ribosomal protein uL10 family. As to quaternary structure, part of the ribosomal stalk of the 50S ribosomal subunit. The N-terminus interacts with L11 and the large rRNA to form the base of the stalk. The C-terminus forms an elongated spine to which L12 dimers bind in a sequential fashion forming a multimeric L10(L12)X complex.

In terms of biological role, forms part of the ribosomal stalk, playing a central role in the interaction of the ribosome with GTP-bound translation factors. This Saccharophagus degradans (strain 2-40 / ATCC 43961 / DSM 17024) protein is Large ribosomal subunit protein uL10.